A 278-amino-acid polypeptide reads, in one-letter code: Octanoyl-[GcvH]:protein N-octanoyltransferase (278 aa).

Positions 44–249 (SQSPPTLRAW…TLQQHGASLL (206 aa)) constitute a BPL/LPL catalytic domain. C148 (acyl-thioester intermediate) is an active-site residue.

It belongs to the octanoyltransferase LipL family.

The enzyme catalyses N(6)-octanoyl-L-lysyl-[glycine-cleavage complex H protein] + L-lysyl-[lipoyl-carrier protein] = N(6)-octanoyl-L-lysyl-[lipoyl-carrier protein] + L-lysyl-[glycine-cleavage complex H protein]. Its pathway is protein modification; protein lipoylation via endogenous pathway; protein N(6)-(lipoyl)lysine from octanoyl-[acyl-carrier-protein]. In terms of biological role, catalyzes the amidotransfer (transamidation) of the octanoyl moiety from octanoyl-GcvH to the lipoyl domain of the E2 subunit of lipoate-dependent enzymes. This is Octanoyl-[GcvH]:protein N-octanoyltransferase from Halalkalibacterium halodurans (strain ATCC BAA-125 / DSM 18197 / FERM 7344 / JCM 9153 / C-125) (Bacillus halodurans).